The chain runs to 490 residues: Chromosomal replication initiator protein DnaA (490 aa).

Residues 1–75 are domain I, interacts with DnaA modulators; that stretch reads MAVSSDAEQK…SELWKQEDAD (75 aa). Positions 75 to 145 are domain II; the sequence is DLLKIEIVVR…SEFRHNVLGS (71 aa). A domain III, AAA+ region region spans residues 146–368; it reads PLDPRYTFGS…GAFNQLLFRQ (223 aa). ATP-binding residues include Gly192, Gly194, Lys195, and Thr196. The segment at 369–490 is domain IV, binds dsDNA; the sequence is SFEPQITIDR…LLRRLINDQA (122 aa).

Belongs to the DnaA family. In terms of assembly, oligomerizes as a right-handed, spiral filament on DNA at oriC.

The protein localises to the cytoplasm. Functionally, plays an essential role in the initiation and regulation of chromosomal replication. ATP-DnaA binds to the origin of replication (oriC) to initiate formation of the DNA replication initiation complex once per cell cycle. Binds the DnaA box (a 9 base pair repeat at the origin) and separates the double-stranded (ds)DNA. Forms a right-handed helical filament on oriC DNA; dsDNA binds to the exterior of the filament while single-stranded (ss)DNA is stabiized in the filament's interior. The ATP-DnaA-oriC complex binds and stabilizes one strand of the AT-rich DNA unwinding element (DUE), permitting loading of DNA polymerase. After initiation quickly degrades to an ADP-DnaA complex that is not apt for DNA replication. Binds acidic phospholipids. This chain is Chromosomal replication initiator protein DnaA, found in Mesorhizobium japonicum (strain LMG 29417 / CECT 9101 / MAFF 303099) (Mesorhizobium loti (strain MAFF 303099)).